The following is a 464-amino-acid chain: Putative major capsid protein (464 aa).

A propeptide spanning residues 1–20 (MTEKKNTERQLTSVQEEVIK) is cleaved from the precursor. A helical transmembrane segment spans residues 423 to 445 (LAQVNASVTFAVLWYGALALRAP).

The protein resides in the virion. The protein localises to the host membrane. This chain is Putative major capsid protein, found in Enterococcus faecalis (Streptococcus faecalis).